A 243-amino-acid polypeptide reads, in one-letter code: Terpene cyclase paxB (243 aa).

A run of 7 helical transmembrane segments spans residues 23 to 43 (FVVG…YISF), 49 to 69 (GMSI…CLVF), 78 to 98 (GVFW…ITFS), 112 to 132 (ISLI…ALAL), 134 to 154 (IGPA…LSVG), 172 to 194 (LWAS…WMYW), and 205 to 225 (LVLW…ICFW).

The protein belongs to the paxB family.

Its subcellular location is the membrane. The protein operates within secondary metabolite biosynthesis. Its function is as follows. Terpene cyclase; part of the ATM2 gene cluster that mediates the biosynthesis of paxilline, a mycotoxin that acts as an inhibitor of mammalian maxi-K channels. PaxG, the geranylgeranyl diphosphate (GGPP) synthase is proposed to catalyze the first step in paxilline biosynthesis. Condensation of indole-3-glycerol phosphate with GGPP by paxC then forms 3-geranylgeranylindole (3-GGI), followed by epoxidation and cyclization of this intermediate (by paxM and paxB) to form paspaline. Paspaline is subsequently converted to 13-desoxypaxilline by paxP, the latter being then converted to paxilline by paxQ. Finally paxilline can be mono- and di-prenylated by paxD. In Penicillium paxilli, this protein is Terpene cyclase paxB.